Consider the following 120-residue polypeptide: Seripauperin-4 (120 aa).

Residues 7 to 24 (IAAGVAAIAATASATTTI) traverse the membrane as a helical segment.

The protein belongs to the SRP1/TIP1 family. Seripauperin subfamily.

Its subcellular location is the membrane. This chain is Seripauperin-4 (PAU4), found in Saccharomyces cerevisiae (strain ATCC 204508 / S288c) (Baker's yeast).